A 357-amino-acid polypeptide reads, in one-letter code: 3-isopropylmalate dehydrogenase (357 aa).

An NAD(+)-binding site is contributed by 76 to 89; the sequence is GPQWDTIDPALRPE. Substrate contacts are provided by arginine 96, arginine 106, arginine 134, and aspartate 224. Mg(2+) is bound by residues aspartate 224, aspartate 248, and aspartate 252. 282–294 contacts NAD(+); it reads GSAPDIAGKGIAN.

This sequence belongs to the isocitrate and isopropylmalate dehydrogenases family. LeuB type 1 subfamily. Homodimer. The cofactor is Mg(2+). Mn(2+) is required as a cofactor.

It localises to the cytoplasm. It catalyses the reaction (2R,3S)-3-isopropylmalate + NAD(+) = 4-methyl-2-oxopentanoate + CO2 + NADH. The protein operates within amino-acid biosynthesis; L-leucine biosynthesis; L-leucine from 3-methyl-2-oxobutanoate: step 3/4. In terms of biological role, catalyzes the oxidation of 3-carboxy-2-hydroxy-4-methylpentanoate (3-isopropylmalate) to 3-carboxy-4-methyl-2-oxopentanoate. The product decarboxylates to 4-methyl-2 oxopentanoate. The protein is 3-isopropylmalate dehydrogenase of Xanthomonas axonopodis pv. citri (strain 306).